The sequence spans 455 residues: tRNA modification GTPase MnmE (455 aa).

(6S)-5-formyl-5,6,7,8-tetrahydrofolate-binding residues include R25, E85, and R124. Positions 221–375 constitute a TrmE-type G domain; it reads GLSTAIIGRP…IEERINKLFF (155 aa). N231 provides a ligand contact to K(+). GTP is bound by residues 231 to 236, 250 to 256, and 275 to 278; these read NVGKSS, TDIEGTT, and DTAG. S235 serves as a coordination point for Mg(2+). T250, I252, and T255 together coordinate K(+). Residue T256 participates in Mg(2+) binding. K455 is a (6S)-5-formyl-5,6,7,8-tetrahydrofolate binding site.

It belongs to the TRAFAC class TrmE-Era-EngA-EngB-Septin-like GTPase superfamily. TrmE GTPase family. Homodimer. Heterotetramer of two MnmE and two MnmG subunits. The cofactor is K(+).

It localises to the cytoplasm. In terms of biological role, exhibits a very high intrinsic GTPase hydrolysis rate. Involved in the addition of a carboxymethylaminomethyl (cmnm) group at the wobble position (U34) of certain tRNAs, forming tRNA-cmnm(5)s(2)U34. The chain is tRNA modification GTPase MnmE from Streptococcus mutans serotype c (strain ATCC 700610 / UA159).